The sequence spans 32 residues: Phallacidin proprotein (32 aa).

Residues Met1–Pro10 constitute a propeptide that is removed on maturation. The segment at residues Ala11 to Pro17 is a cross-link (cyclopeptide (Ala-Pro)). The segment at residues Trp12 to Cys16 is a cross-link (2'-cysteinyl-6'-hydroxytryptophan sulfoxide (Trp-Cys)). A propeptide spanning residues Cys18–Lys32 is cleaved from the precursor.

The protein belongs to the MSDIN fungal toxin family. Processed by the macrocyclase-peptidase enzyme POPB to yield a toxic cyclic heptapeptide. POPB first removes 10 residues from the N-terminus. Conformational trapping of the remaining peptide forces the enzyme to release this intermediate rather than proceed to macrocyclization. The enzyme rebinds the remaining peptide in a different conformation and catalyzes macrocyclization of the N-terminal 7 residues.

Its function is as follows. Major toxin that belongs to the bicyclic heptapeptides called phallotoxins. Although structurally related to amatoxins, phallotoxins have a different mode of action, which is the stabilization of F-actin. Phallotoxins are poisonous when administered parenterally, but not orally because of poor absorption. This Amanita pallidorosea protein is Phallacidin proprotein.